The sequence spans 629 residues: tRNA uridine 5-carboxymethylaminomethyl modification enzyme MnmG (629 aa).

FAD is bound by residues 13 to 18 (GGGHAG), Val-125, and Ser-180. NAD(+) is bound at residue 273 to 287 (GPRYCPSIEDKVMRF). Gln-370 is an FAD binding site.

This sequence belongs to the MnmG family. Homodimer. Heterotetramer of two MnmE and two MnmG subunits. It depends on FAD as a cofactor.

It is found in the cytoplasm. Functionally, NAD-binding protein involved in the addition of a carboxymethylaminomethyl (cmnm) group at the wobble position (U34) of certain tRNAs, forming tRNA-cmnm(5)s(2)U34. In Pasteurella multocida (strain Pm70), this protein is tRNA uridine 5-carboxymethylaminomethyl modification enzyme MnmG.